The following is a 421-amino-acid chain: Enolase (421 aa).

The active-site Proton donor is the Glu-207. Asp-244, Glu-285, and Asp-312 together coordinate Mg(2+). The Proton acceptor role is filled by Lys-337. Residues Lys-337, Arg-366, Ser-367, and Lys-388 each contribute to the (2R)-2-phosphoglycerate site.

It belongs to the enolase family. The cofactor is Mg(2+).

It is found in the cytoplasm. Its subcellular location is the secreted. It localises to the cell surface. It catalyses the reaction (2R)-2-phosphoglycerate = phosphoenolpyruvate + H2O. Its pathway is carbohydrate degradation; glycolysis; pyruvate from D-glyceraldehyde 3-phosphate: step 4/5. Functionally, catalyzes the reversible conversion of 2-phosphoglycerate (2-PG) into phosphoenolpyruvate (PEP). It is essential for the degradation of carbohydrates via glycolysis. The protein is Enolase of Ehrlichia ruminantium (strain Gardel).